Here is a 347-residue protein sequence, read N- to C-terminus: Tetracycline resistance determinant (347 aa).

8 helical membrane-spanning segments follow: residues 3-20 (VLGA…LIVA), 30-52 (SPAA…PVEL), 73-95 (CSAV…PLFL), 108-130 (LVVI…LIAS), 137-156 (LAIV…ATTG), 161-183 (MWGI…TVIT), 204-226 (CAGQ…AVAL), and 294-316 (GFHI…TWFL). The tract at residues 321-347 (EETAPEEERPAESGAGAKNGPLPASDA) is disordered.

It belongs to the major facilitator superfamily. TCR/Tet family.

The protein resides in the cell membrane. Resistance to tetracycline by an active tetracycline efflux. This is an energy-dependent process that decreases the accumulation of the antibiotic in whole cells. This protein functions as a metal-tetracycline/H(+) antiporter. The polypeptide is Tetracycline resistance determinant (tetB) (Streptomyces rimosus).